The chain runs to 453 residues: MSRIEKIIAREVLDSRGTPTVEVELWTEFGGYGIAKAPSGASTGENEALELRDGDKARYNGKGVLKAVANVNDKIAPALIGHDVQDQLGLDRVMIKLDGTEFKKKLGANGMLAVSLAAAHAAASELEVPLYRYIGGVQAKRLPVPMLNVINGGEHADSAIDFQEFMIMPVGAPTFKEALRWSSETFQALKSLLHDKGDITAVGDEGGFAPHFSWAYAKQDLASFKAKTPAEIALDLLVEAITKAGYKVGKDGIMIAMDCASSELYFEDKKYHFKKIEKVTGQEWAFTTEEMIAYLEKLVNNYPIISIEDGLSEKDWDGFVQLTEKIGDRVQIVGDDLFTTNPRFIKEGISKDAANSTLIKLNQIGTLSETVEAITMTQKAGWTAVVSHRSGETEDATIADLAVAFNAGQIKTGSMSRSDRIAKYNRLLQIEDQLGEDAIYDGYATFYNLKINK.

Glutamine 163 contributes to the (2R)-2-phosphoglycerate binding site. The active-site Proton donor is the glutamate 205. The Mg(2+) site is built by aspartate 258, glutamate 308, and aspartate 335. Residues lysine 360, arginine 389, serine 390, and lysine 411 each contribute to the (2R)-2-phosphoglycerate site. The Proton acceptor role is filled by lysine 360.

Belongs to the enolase family. It depends on Mg(2+) as a cofactor.

The protein resides in the cytoplasm. Its subcellular location is the secreted. It localises to the cell surface. It catalyses the reaction (2R)-2-phosphoglycerate = phosphoenolpyruvate + H2O. The protein operates within carbohydrate degradation; glycolysis; pyruvate from D-glyceraldehyde 3-phosphate: step 4/5. Its function is as follows. Catalyzes the reversible conversion of 2-phosphoglycerate (2-PG) into phosphoenolpyruvate (PEP). It is essential for the degradation of carbohydrates via glycolysis. This Mesoplasma florum (strain ATCC 33453 / NBRC 100688 / NCTC 11704 / L1) (Acholeplasma florum) protein is Enolase.